The chain runs to 189 residues: Potassium-transporting ATPase KdpC subunit (189 aa).

A helical transmembrane segment spans residues 6-26; that stretch reads PAILMLIIFTILCGGIYPAVV.

Belongs to the KdpC family. The system is composed of three essential subunits: KdpA, KdpB and KdpC.

The protein resides in the cell inner membrane. Functionally, part of the high-affinity ATP-driven potassium transport (or Kdp) system, which catalyzes the hydrolysis of ATP coupled with the electrogenic transport of potassium into the cytoplasm. This subunit acts as a catalytic chaperone that increases the ATP-binding affinity of the ATP-hydrolyzing subunit KdpB by the formation of a transient KdpB/KdpC/ATP ternary complex. This chain is Potassium-transporting ATPase KdpC subunit, found in Geobacter sulfurreducens (strain ATCC 51573 / DSM 12127 / PCA).